The sequence spans 178 residues: Caveolin-1 (178 aa).

The residue at position 2 (Ser2) is an N-acetylserine. The residue at position 2 (Ser2) is a Phosphoserine. A required for homooligomerization region spans residues 2 to 94 (SGGKYVDSEG…WKASFTTFTV (93 aa)). Over 2–104 (SGGKYVDSEG…TKYWFYRLLS (103 aa)) the chain is Cytoplasmic. At Lys5 the chain carries N6-acetyllysine; alternate. Lys5 participates in a covalent cross-link: Glycyl lysine isopeptide (Lys-Gly) (interchain with G-Cter in ubiquitin); alternate. Tyr6 is modified (phosphotyrosine). Position 9 is a phosphoserine (Ser9). The residue at position 14 (Tyr14) is a Phosphotyrosine; by ABL1. A Phosphotyrosine modification is found at Tyr25. Glycyl lysine isopeptide (Lys-Gly) (interchain with G-Cter in ubiquitin) cross-links involve residues Lys26, Lys30, Lys39, Lys47, and Lys57. The interval 82–94 (DGIWKASFTTFTV) is interaction with CAVIN3. The helical intramembrane region spans 105–125 (ALFGIPMALIWGIYFAILSFL). The Cytoplasmic segment spans residues 126–178 (HIWAVVPCIKSFLIEIQCISRVYSIYVHTFCDPLFEAIGKIFSNIRINMQKEI). The interacts with SPRY1, SPRY2, SPRY3 and SPRY4 stretch occupies residues 131–142 (VPCIKSFLIEIQ). 3 S-palmitoyl cysteine lipidation sites follow: Cys133, Cys143, and Cys156. The segment at 149 to 160 (SIYVHTFCDPLF) is interacts with SPRY1, SPRY2, and SPRY4. An interacts with SPRY1, SPRY2, SPRY3 and SPRY4 region spans residues 167–178 (FSNIRINMQKEI).

This sequence belongs to the caveolin family. As to quaternary structure, homooligomer. Interacts (via the N-terminus) with DPP4; the interaction is direct. Forms a stable heterooligomeric complex with CAV2 that targets to lipid rafts and drives caveolae formation. Interacts with PACSIN2; this interaction induces membrane tubulation. Interacts with BMX, BTK, CTNNB1, CDH1, GLIPR2, JUP, NOSTRIN, SNAP25 and STX1A. Interacts with SLC7A9. Interacts with TGFBR1. Interacts with CAVIN3 (via leucine-zipper domain) in a cholesterol-sensitive manner. Interacts with CAVIN1. Interacts with EHD2 in a cholesterol-dependent manner. Forms a ternary complex with UBXN6 and VCP; mediates CAV1 targeting to lysosomes for degradation. Interacts with ABCG1; this interaction regulates ABCG1-mediated cholesterol efflux. Interacts with NEU3; this interaction enhances NEU3 sialidase activity within caveola. Interacts (via C-terminus) with SPRY1, SPRY2 (via C-terminus), SPRY3, and SPRY4. In terms of processing, phosphorylated at Tyr-14 by ABL1 in response to oxidative stress. Ubiquitinated. Undergo monoubiquitination and multi- and/or polyubiquitination. Monoubiquitination of N-terminal lysines promotes integration in a ternary complex with UBXN6 and VCP which promotes oligomeric CAV1 targeting to lysosomes for degradation. Ubiquitinated by ZNRF1; leading to degradation and modulation of the TLR4-mediated immune response.

The protein resides in the golgi apparatus membrane. It is found in the cell membrane. The protein localises to the membrane. It localises to the caveola. Its subcellular location is the membrane raft. May act as a scaffolding protein within caveolar membranes. Forms a stable heterooligomeric complex with CAV2 that targets to lipid rafts and drives caveolae formation. Mediates the recruitment of CAVIN proteins (CAVIN1/2/3/4) to the caveolae. Interacts directly with G-protein alpha subunits and can functionally regulate their activity. Involved in the costimulatory signal essential for T-cell receptor (TCR)-mediated T-cell activation. Its binding to DPP4 induces T-cell proliferation and NF-kappa-B activation in a T-cell receptor/CD3-dependent manner. Recruits CTNNB1 to caveolar membranes and may regulate CTNNB1-mediated signaling through the Wnt pathway. Negatively regulates TGFB1-mediated activation of SMAD2/3 by mediating the internalization of TGFBR1 from membrane rafts leading to its subsequent degradation. Binds 20(S)-hydroxycholesterol (20(S)-OHC). This chain is Caveolin-1 (CAV1), found in Otolemur garnettii (Small-eared galago).